The chain runs to 80 residues: Acyl carrier protein (80 aa).

Residues 4-79 (EDIFSKVKDI…DAVDFIASKA (76 aa)) form the Carrier domain. The residue at position 39 (Ser39) is an O-(pantetheine 4'-phosphoryl)serine.

It belongs to the acyl carrier protein (ACP) family. Post-translationally, 4'-phosphopantetheine is transferred from CoA to a specific serine of apo-ACP by AcpS. This modification is essential for activity because fatty acids are bound in thioester linkage to the sulfhydryl of the prosthetic group.

It localises to the cytoplasm. It participates in lipid metabolism; fatty acid biosynthesis. In terms of biological role, carrier of the growing fatty acid chain in fatty acid biosynthesis. The sequence is that of Acyl carrier protein from Synechococcus elongatus (strain ATCC 33912 / PCC 7942 / FACHB-805) (Anacystis nidulans R2).